A 501-amino-acid polypeptide reads, in one-letter code: Ribose import ATP-binding protein RbsA (501 aa).

2 consecutive ABC transporter domains span residues 5–241 (LELK…VGRK) and 249–495 (LNLP…VGKQ). 37–44 (GENGAGKS) contributes to the ATP binding site.

This sequence belongs to the ABC transporter superfamily. Ribose importer (TC 3.A.1.2.1) family. In terms of assembly, the complex is composed of an ATP-binding protein (RbsA), two transmembrane proteins (RbsC) and a solute-binding protein (RbsB).

The protein resides in the cell inner membrane. The catalysed reaction is D-ribose(out) + ATP + H2O = D-ribose(in) + ADP + phosphate + H(+). Part of the ABC transporter complex RbsABC involved in ribose import. Responsible for energy coupling to the transport system. The chain is Ribose import ATP-binding protein RbsA from Photorhabdus laumondii subsp. laumondii (strain DSM 15139 / CIP 105565 / TT01) (Photorhabdus luminescens subsp. laumondii).